The sequence spans 158 residues: MKSLIVFACLVAYAAADCTSLNRLLVKRQWAEAYGEGTNRELLGNRIWEDLFANMPDARGLFSRVNGNDIDSSEFQAHSLRVLGGLDMCVASLDDVPVLNALLARLNSQHDSRGIPAAGYPAFVASAISAVRATVGARSFDNDAWNSCMNQIVSGISG.

The N-terminal stretch at 1–16 (MKSLIVFACLVAYAAA) is a signal peptide. The 142-residue stretch at 17-158 (DCTSLNRLLV…MNQIVSGISG (142 aa)) folds into the Globin domain. An intrachain disulfide couples Cys18 to Cys148. Cys89 serves as a coordination point for hydrogen sulfide. His110 serves as a coordination point for heme b.

Belongs to the globin family. The 400 kDa hemoglobin consists of a spherical 24-mer arranged as a double layer of dome-shaped dodecamers. Each dodecamer is composed of the 3-fold trimer of the tetramer A1-A2-B1-B2 having one intra-tetramer (A1-B2) disulfide bond and one inter-tetramer (B1-B2) disulfide bond per tetramer.

It localises to the secreted. The extracellular giant hemoglobin is able to bind and transport oxygen and hydrosulfide simultaneously and reversibly at two different sites. The polypeptide is Extracellular giant hemoglobin major globin subunit A2 (ghbA2) (Oligobrachia mashikoi (Beard worm)).